We begin with the raw amino-acid sequence, 475 residues long: Probable pectate lyase 7 (475 aa).

An N-terminal signal peptide occupies residues 1–24; the sequence is METARLFKLVCVICIASLIPTIRA. 2 N-linked (GlcNAc...) asparagine glycosylation sites follow: Asn-67 and Asn-96. Residues 91–117 are disordered; sequence ISSPTNSTRRSLTGRGKGKGKGKWSKL. The Ca(2+) site is built by Asp-271, Asp-295, and Asp-299. Residue Arg-351 is part of the active site.

It belongs to the polysaccharide lyase 1 family. Requires Ca(2+) as cofactor.

The enzyme catalyses Eliminative cleavage of (1-&gt;4)-alpha-D-galacturonan to give oligosaccharides with 4-deoxy-alpha-D-galact-4-enuronosyl groups at their non-reducing ends.. Its pathway is glycan metabolism; pectin degradation; 2-dehydro-3-deoxy-D-gluconate from pectin: step 2/5. This is Probable pectate lyase 7 from Arabidopsis thaliana (Mouse-ear cress).